The following is a 459-amino-acid chain: Proton-coupled folate transporter (459 aa).

An N-acetylmethionine modification is found at M1. The Cytoplasmic portion of the chain corresponds to 1–25 (MEGRANSPGEPRAWPTRSVLCRGCV). A helical membrane pass occupies residues 26–44 (EPLVFLANFALVLQGPVTT). The Extracellular portion of the chain corresponds to 45-82 (QYLWHRFSADLGYNGTRHRDSCSNHSVDPIAQEVETLT). N-linked (GlcNAc...) asparagine glycosylation is found at N58 and N68. An intrachain disulfide couples C66 to C298. Residues 83–108 (SHWTLYMNVGGFLVGLFSSTLLGAWS) traverse the membrane as a helical segment. Residues 109–112 (DCVG) are Cytoplasmic-facing. Residues 113–135 (RRPLLVLASLGLLLQTVLSIFVV) form a helical membrane-spanning segment. The Extracellular segment spans residues 136–140 (QLHLH). Residues 141-154 (IGYLVLGRILCALL) traverse the membrane as a helical segment. Topologically, residues 155-177 (GDFSGLLAASFASVADVSSSRTR) are cytoplasmic. Residues D156 and E185 each contribute to the H(+) site. The helical transmembrane segment at 178 to 203 (TIRMALLEACIGVAGMLASFIGGFLL) threads the bilayer. The Extracellular segment spans residues 204 to 208 (QEQVY). The helical transmembrane segment at 209–227 (VNPFWLALAVLTVMTLYAA) threads the bilayer. At 228–266 (FCFGETVKERTPTRLFTLRHHRSVIQLYVTQAPEKSRKH) the chain is on the cytoplasmic side. A helical membrane pass occupies residues 267–289 (LALYSLAIFVMITVHLGAQDILT). A H(+)-binding site is contributed by H281. Over 290–302 (LYELSAPLCWDSR) the chain is Extracellular. Residues 303–325 (LISYGSAAQQLPYLTSLLGLRLL) form a helical membrane-spanning segment. Topologically, residues 326-331 (QYCLAD) are cytoplasmic. The helical transmembrane segment at 332–351 (TWVAEIGLVFNILGMMVFAF) threads the bilayer. Topologically, residues 352-355 (ATIT) are extracellular. A helical membrane pass occupies residues 356-376 (PLMFTGYGLLFLSLVVTPIIR). Residues 377–388 (AKLSRLVRQSEQ) are Cytoplasmic-facing. Residues 389–414 (GALFSALACVNGLAMLMASGIFNSLY) form a helical membrane-spanning segment. Residues 415 to 422 (PATLNLMK) lie on the Extracellular side of the membrane. A helical membrane pass occupies residues 423–441 (GFPFLLAAGLLFIPAILMG). At 442 to 459 (ILERDNHCPEFQEFSQSP) the chain is on the cytoplasmic side. The residue at position 458 (S458) is a Phosphoserine.

Belongs to the major facilitator superfamily. SLC46A family. Monomer. Expressed in retina and retinal pigment epithelium.

It is found in the cell membrane. The protein localises to the apical cell membrane. It localises to the basolateral cell membrane. The protein resides in the endosome membrane. Its subcellular location is the cytoplasm. It catalyses the reaction folate(in) + H(+)(in) = folate(out) + H(+)(out). It carries out the reaction (6S)-5-methyl-5,6,7,8-tetrahydrofolate(in) + H(+)(in) = (6S)-5-methyl-5,6,7,8-tetrahydrofolate(out) + H(+)(out). The catalysed reaction is methotrexate(in) + H(+)(in) = methotrexate(out) + H(+)(out). The enzyme catalyses pemetrexed(in) + H(+)(in) = pemetrexed(out) + H(+)(out). Its function is as follows. Proton-coupled folate symporter that mediates folate absorption using an H(+) gradient as a driving force. Involved in the intestinal absorption of folates at the brush-border membrane of the proximal jejunum, and the transport from blood to cerebrospinal fluid across the choroid plexus. Functions at acidic pH via alternate outward- and inward-open conformation states. Protonation of residues in the outward open state primes the protein for transport. Binding of folate promotes breaking of salt bridge network and subsequent closure of the extracellular gate, leading to the inward-open state and release of protons and folate. Also able to transport antifolate drugs, such as methotrexate and pemetrexed. Involved in FOLR1-mediated endocytosis by serving as a route of export of folates from acidified endosomes. Also acts as a lower-affinity, pH-independent heme carrier protein and constitutes the main importer of heme in the intestine. Imports heme in the retina and retinal pigment epithelium, in neurons of the hippocampus, in hepatocytes and in the renal epithelial cells. Hence, participates in the trafficking of heme and increases intracellular iron content. This chain is Proton-coupled folate transporter, found in Bos taurus (Bovine).